Consider the following 238-residue polypeptide: Sugar fermentation stimulation protein homolog (238 aa).

Belongs to the SfsA family.

This Klebsiella pneumoniae (strain 342) protein is Sugar fermentation stimulation protein homolog.